The following is a 199-amino-acid chain: Urease accessory protein UreG (199 aa).

Position 8 to 15 (8 to 15) interacts with GTP; the sequence is GPVGSGKT.

The protein belongs to the SIMIBI class G3E GTPase family. UreG subfamily. In terms of assembly, homodimer. UreH, UreF and UreG form a complex that acts as a GTP-hydrolysis-dependent molecular chaperone, activating the urease apoprotein by helping to assemble the nickel containing metallocenter of UreC. The UreE protein probably delivers the nickel.

The protein resides in the cytoplasm. Its function is as follows. Facilitates the functional incorporation of the urease nickel metallocenter. This process requires GTP hydrolysis, probably effectuated by UreG. The polypeptide is Urease accessory protein UreG (Helicobacter acinonychis (strain Sheeba)).